A 197-amino-acid polypeptide reads, in one-letter code: Fucoxanthin-chlorophyll a-c binding protein E, chloroplastic (197 aa).

The N-terminal 31 residues, 1 to 31 (MKFVVFASLLASAARFAPAQQSARTSVATNM), are a transit peptide targeting the chloroplast. 3 helical membrane-spanning segments follow: residues 73–94 (ISML…PGDI), 114–134 (ISGA…LAVM), and 174–196 (GRAA…SLIP).

The protein belongs to the fucoxanthin chlorophyll protein family. In terms of assembly, the LHC complex of chromophytic algae is composed of fucoxanthin, chlorophyll A and C bound non-covalently by fucoxanthin chlorophyll proteins (FCPs). The ratio of the pigments in LHC; fucoxanthin: chlorophyll C: chlorophyll A; (0.6-1): (0.1-0.3): (1).

Its subcellular location is the plastid. It is found in the chloroplast thylakoid membrane. The light-harvesting complex (LHC) functions as a light receptor, it captures and delivers excitation energy to photosystems with which it is closely associated. Energy is transferred from the carotenoid and chlorophyll C (or B) to chlorophyll A and the photosynthetic reaction centers where it is used to synthesize ATP and reducing power. The chain is Fucoxanthin-chlorophyll a-c binding protein E, chloroplastic (FCPE) from Phaeodactylum tricornutum (Diatom).